The primary structure comprises 379 residues: Epoxyqueuosine reductase (379 aa).

Aspartate 140 (proton donor) is an active-site residue. Residues 184-214 form the 4Fe-4S ferredoxin-type domain; the sequence is FEPDTPASDLCGSCNQCVKACPTGSLLGEGK. Residues cysteine 194, cysteine 197, cysteine 200, cysteine 204, cysteine 220, cysteine 246, cysteine 249, and cysteine 253 each contribute to the [4Fe-4S] cluster site. Residues 307–332 form an HEAT-like PBS-type repeat; sequence QRNAIIILARYKDKTAVPDLIDCLQN.

This sequence belongs to the QueG family. In terms of assembly, monomer. Cob(II)alamin is required as a cofactor. The cofactor is [4Fe-4S] cluster.

It is found in the cytoplasm. It carries out the reaction epoxyqueuosine(34) in tRNA + AH2 = queuosine(34) in tRNA + A + H2O. The protein operates within tRNA modification; tRNA-queuosine biosynthesis. Its function is as follows. Catalyzes the conversion of epoxyqueuosine (oQ) to queuosine (Q), which is a hypermodified base found in the wobble positions of tRNA(Asp), tRNA(Asn), tRNA(His) and tRNA(Tyr). The sequence is that of Epoxyqueuosine reductase from Listeria monocytogenes serovar 1/2a (strain ATCC BAA-679 / EGD-e).